The chain runs to 1626 residues: Collagen alpha-1(XXII) chain (1626 aa).

Residues 1 to 27 form the signal peptide; it reads MAGLRGNAVAGLLWMLLLWSGGGGCQA. A VWFA domain is found at 38 to 213; that stretch reads DLVFLLDTSS…NAIDKIRGKL (176 aa). One can recognise a Laminin G-like domain in the interval 239–427; the sequence is GTKEITGFDL…LQRIVIYCDS (189 aa). The N-linked (GlcNAc...) asparagine glycan is linked to asparagine 375. Collagen-like domains lie at 481 to 520, 526 to 565, 566 to 625, 657 to 708, 714 to 773, 774 to 833, 868 to 922, 925 to 984, 1047 to 1095, 1118 to 1155, 1156 to 1215, 1249 to 1308, 1315 to 1374, 1387 to 1446, 1495 to 1550, and 1575 to 1604; these read GEKGEMGVAGPMGLPGPKGDIGAIGPVGAPGPKGEKGDVG, QGEKGEKGSLGLPGPPGRDGSKGMRGEPGELGEPGLPGEV, GMRG…PGPS, GEQG…GIPG, GPPG…PGER, GEDG…PGLK, GPKG…GAPG, GAPG…PGKG, AGPP…PGKP, PPGPPGLPGLPGFKGDKGVPGKPGREGTEGKKGEAGPP, GLPG…AGPP, GKPG…PGKD, GPQG…PGEK, GEPG…PGPP, SQGR…PGAP, and DGLPGIPGPQGETGPAGHPGLPGPPGPPGQ. Disordered regions lie at residues 506-1002, 1019-1103, 1119-1458, and 1491-1609; these read PVGA…GPLG, GGQC…LLSP, PGPP…RGES, and YMKS…DPSQ. Residues 544-553 are compositionally biased toward basic and acidic residues; sequence DGSKGMRGEP. Over residues 571–580 the composition is skewed to pro residues; sequence QGPPGLPGPP. Residues 591-606 are compositionally biased toward basic and acidic residues; it reads ERGEKGTRGEKGERGL. The segment covering 661–670 has biased composition (low complexity); sequence APGPRGHQGA. 2 stretches are compositionally biased toward pro residues: residues 715–728 and 742–751; these read PPGPPGVPGPPGPG and KPGPPGPTGP. 2 stretches are compositionally biased toward basic and acidic residues: residues 769–778 and 815–826; these read EPGERGEDGL and RGEKGDQGEKGE. The span at 908 to 939 shows a compositional bias: low complexity; that stretch reads AHGAPGAAGNPGAPGHVGAPGPSGPPGSVGAP. Over residues 945–957 the composition is skewed to basic and acidic residues; it reads PGKDGERGEKGAA. Composition is skewed to low complexity over residues 959-974 and 1056-1065; these read EEGSPGPVGPRGDPGA and PGDKGSPGSR. Composition is skewed to basic and acidic residues over residues 1131 to 1151 and 1173 to 1185; these read KGDKGVPGKPGREGTEGKKGE and RGADGEVGQKGDQ. The span at 1205–1223 shows a compositional bias: low complexity; the sequence is ADGIAGAAGPPGIQGSPGK. The segment covering 1241-1250 has biased composition (basic and acidic residues); sequence EEGKEGRDGK. The segment covering 1260-1275 has biased composition (low complexity); it reads AGEPGLPGPEGARGPP. Over residues 1379 to 1389 the composition is skewed to low complexity; it reads KEGVPGKPGEP. A compositionally biased stretch (basic and acidic residues) spans 1391 to 1404; it reads FKGERGDPGIKGDK. Positions 1405-1414 are enriched in gly residues; the sequence is GPPGGKGQPG. A compositionally biased stretch (pro residues) spans 1440-1449; that stretch reads VGPPGPPGQP. Positions 1521–1530 are enriched in gly residues; that stretch reads GRPGQGGLEG. Residues 1595-1604 show a composition bias toward pro residues; that stretch reads LPGPPGPPGQ.

This sequence belongs to the fibril-associated collagens with interrupted helices (FACIT) family. In terms of tissue distribution, restrictive expression is observed at tissue junctions such as the myotendinous junction in skeletal and heart muscle, the articular cartilage-synovial fluid junction, or the border between the anagen hair follicle and the dermis in the skin. It is deposited in the basement membrane zone of the myotendinous junction and the hair follicle and associated with the extrafibrillar matrix in cartilage.

It localises to the secreted. Its subcellular location is the extracellular space. It is found in the extracellular matrix. The protein resides in the cytoplasm. Its function is as follows. Acts as a cell adhesion ligand for skin epithelial cells and fibroblasts. The sequence is that of Collagen alpha-1(XXII) chain (COL22A1) from Homo sapiens (Human).